A 1281-amino-acid polypeptide reads, in one-letter code: Zinc finger transcription factor Trps1 (1281 aa).

Disordered stretches follow at residues 1-101 and 116-204; these read MVRK…VSFP and PAAG…KGDL. 2 stretches are compositionally biased toward polar residues: residues 21-31 and 40-49; these read LEPTATESKVS and DQMSENTDQS. Residue lysine 29 forms a Glycyl lysine isopeptide (Lys-Gly) (interchain with G-Cter in SUMO2) linkage. Serine 90 and serine 127 each carry phosphoserine. Over residues 148–162 the composition is skewed to basic and acidic residues; that stretch reads LETKEEHKMSPKATE. A compositionally biased stretch (polar residues) spans 166-189; it reads PVQSGQANCQGLSPVSVASKNPQV. Serine 178 and serine 216 each carry phosphoserine. A C2H2-type 1; atypical zinc finger spans residues 222 to 247; sequence FKCNICGYGYYGNDPTDLIKHFRKYH. Lysine 263 is covalently cross-linked (Glycyl lysine isopeptide (Lys-Gly) (interchain with G-Cter in SUMO2)). The C2H2-type 2; atypical zinc-finger motif lies at 333–358; sequence FRCKFCNFTYMGNSSTELEQHFLQTH. A disordered region spans residues 365-393; the sequence is SLPSSEGVKPSEKNSNKSIPALRASDSGD. Residues lysine 418, lysine 457, lysine 474, and lysine 488 each participate in a glycyl lysine isopeptide (Lys-Gly) (interchain with G-Cter in SUMO2) cross-link. The tract at residues 484–515 is disordered; that stretch reads NDLAKSVEGEPLTKPEKGLSGAKKKDFPSKGA. Residues 488–515 are compositionally biased toward basic and acidic residues; it reads KSVEGEPLTKPEKGLSGAKKKDFPSKGA. The C2H2-type 3; atypical zinc finger occupies 614-637; it reads HQCHQCSFSTPDVDVLLFHYETVH. The mediates interaction with GLI3 stretch occupies residues 635-819; that stretch reads TVHESQASDV…SLGLLTPVSS (185 aa). Lysine 645 is covalently cross-linked (Glycyl lysine isopeptide (Lys-Gly) (interchain with G-Cter in SUMO2)). C2H2-type zinc fingers lie at residues 666–689 and 692–715; these read HSCT…RRAH and YKCR…NTVH. Glycyl lysine isopeptide (Lys-Gly) (interchain with G-Cter in SUMO2) cross-links involve residues lysine 737 and lysine 755. Lysine 766 participates in a covalent cross-link: Glycyl lysine isopeptide (Lys-Gly) (interchain with G-Cter in SUMO1); alternate. A Glycyl lysine isopeptide (Lys-Gly) (interchain with G-Cter in SUMO2); alternate cross-link involves residue lysine 766. Residues lysine 825 and lysine 850 each participate in a glycyl lysine isopeptide (Lys-Gly) (interchain with G-Cter in SUMO2) cross-link. Residues 856 to 885 are disordered; sequence APAGSEKSASLTQQYPASGESKTKDESQSL. Positions 862–871 are enriched in polar residues; that stretch reads KSASLTQQYP. Residues lysine 877 and lysine 879 each participate in a glycyl lysine isopeptide (Lys-Gly) (interchain with G-Cter in SUMO2) cross-link. A GATA-type zinc finger spans residues 896-920; it reads CANCLTTKTSLWRKNANGGYVCNAC. Residues lysine 925, lysine 937, and lysine 965 each participate in a glycyl lysine isopeptide (Lys-Gly) (interchain with G-Cter in SUMO2) cross-link. The span at 961–977 shows a compositional bias: polar residues; it reads EQLNKQQRGSGEEQVNG. The segment at 961 to 1000 is disordered; it reads EQLNKQQRGSGEEQVNGSPLERRSEDHLSESHPREIPLPS. Residue serine 978 is modified to Phosphoserine. A compositionally biased stretch (basic and acidic residues) spans 980–995; that stretch reads LERRSEDHLSESHPRE. Positions 985 to 1184 are mediates interaction with RNF4; that stretch reads EDHLSESHPR…PTANGASKEK (200 aa). Residues lysine 1003, lysine 1012, lysine 1030, and lysine 1040 each participate in a glycyl lysine isopeptide (Lys-Gly) (interchain with G-Cter in SUMO2) cross-link. Positions 1040–1049 are enriched in polar residues; sequence KSPQESTGDP. The disordered stretch occupies residues 1040–1078; that stretch reads KSPQESTGDPGNSSSVSDGKGSSERGSPIEKYMRPAKHP. A Phosphoserine modification is found at serine 1041. A compositionally biased stretch (low complexity) spans 1050–1059; it reads GNSSSVSDGK. The span at 1060–1072 shows a compositional bias: basic and acidic residues; that stretch reads GSSERGSPIEKYM. Serine 1066 carries the post-translational modification Phosphoserine. Lysine 1070 participates in a covalent cross-link: Glycyl lysine isopeptide (Lys-Gly) (interchain with G-Cter in SUMO2). Serine 1085 bears the Phosphoserine mark. The segment at 1163–1281 is transcriptional repressor domain; sequence PLDLAIKHSR…QAEKNGKPKE (119 aa). The segment at 1169–1195 is disordered; sequence KHSRPGPTANGASKEKTKAPPTVKNED. Glycyl lysine isopeptide (Lys-Gly) (interchain with G-Cter in SUMO2); alternate cross-links involve residues lysine 1192 and lysine 1201. Residues lysine 1192 and lysine 1201 each participate in a glycyl lysine isopeptide (Lys-Gly) (interchain with G-Cter in SUMO); alternate cross-link. Residue lysine 1201 forms a Glycyl lysine isopeptide (Lys-Gly) (interchain with G-Cter in SUMO1); alternate linkage. C2H2-type zinc fingers lie at residues 1215–1237 and 1243–1267; these read TKCV…MSCH and FQCS…RGLH.

In terms of assembly, interacts with RNF4; regulates TRPS1 repressor activity. Interacts specifically with the activator form of GLI3 (GLI3A) but not with the repressor form (GLI3R). Post-translationally, sumoylated. Sumoylation in the repressor domain inhibits the transcription repression activity. Sumoylation on Lys-1201 is the major site. Appears to be sumoylated on multiple sites. In terms of tissue distribution, in the embryo, expression is detected in both visceral and skeletal tissues. Found in the maxilla, mandible, snout, prospective phalanges and in the femoral head within the developing hip. Also expressed in the hair follicles.

The protein localises to the nucleus. In terms of biological role, transcriptional repressor. Binds specifically to GATA sequences and represses expression of GATA-regulated genes at selected sites and stages in vertebrate development. Regulates chondrocyte proliferation and differentiation. Executes multiple functions in proliferating chondrocytes, expanding the region of distal chondrocytes, activating proliferation in columnar cells and supporting the differentiation of columnar into hypertrophic chondrocytes. The chain is Zinc finger transcription factor Trps1 (Trps1) from Mus musculus (Mouse).